Here is a 391-residue protein sequence, read N- to C-terminus: 3-ketoacyl-CoA thiolase (391 aa).

Cys95 (acyl-thioester intermediate) is an active-site residue. Residues His347 and Cys377 each act as proton acceptor in the active site.

The protein belongs to the thiolase-like superfamily. Thiolase family. As to quaternary structure, heterotetramer of two alpha chains (FadB) and two beta chains (FadA).

It is found in the cytoplasm. It catalyses the reaction an acyl-CoA + acetyl-CoA = a 3-oxoacyl-CoA + CoA. Its pathway is lipid metabolism; fatty acid beta-oxidation. In terms of biological role, catalyzes the final step of fatty acid oxidation in which acetyl-CoA is released and the CoA ester of a fatty acid two carbons shorter is formed. This is 3-ketoacyl-CoA thiolase from Pseudomonas fragi.